Reading from the N-terminus, the 341-residue chain is Mitochondrial transcription factor 1 (341 aa).

Leu-23, Glu-77, Asp-101, and Asn-137 together coordinate S-adenosyl-L-methionine.

It belongs to the class I-like SAM-binding methyltransferase superfamily. rRNA adenine N(6)-methyltransferase family.

The protein localises to the mitochondrion. Its function is as follows. Mitochondrial transcription factor that confers selective promoter recognition on the core subunit of the yeast mitochondrial RNA polymerase. Interacts with DNA in a non-specific manner. The polypeptide is Mitochondrial transcription factor 1 (MTF1) (Saccharomyces paradoxus (Yeast)).